Consider the following 172-residue polypeptide: L-amino acid oxidase (172 aa).

Residue 44–47 (GPMR) coordinates FAD. Positions 47 and 103 each coordinate substrate.

It belongs to the flavin monoamine oxidase family. FIG1 subfamily. Heterodimer; non-covalently linked. FAD is required as a cofactor. In terms of processing, N-glycosylated. Expressed by the venom gland.

The protein resides in the secreted. It carries out the reaction an L-alpha-amino acid + O2 + H2O = a 2-oxocarboxylate + H2O2 + NH4(+). The catalysed reaction is L-leucine + O2 + H2O = 4-methyl-2-oxopentanoate + H2O2 + NH4(+). It catalyses the reaction L-phenylalanine + O2 + H2O = 3-phenylpyruvate + H2O2 + NH4(+). The enzyme catalyses L-tryptophan + O2 + H2O = indole-3-pyruvate + H2O2 + NH4(+). It carries out the reaction L-methionine + O2 + H2O = 4-methylsulfanyl-2-oxobutanoate + H2O2 + NH4(+). The catalysed reaction is L-isoleucine + O2 + H2O = (S)-3-methyl-2-oxopentanoate + H2O2 + NH4(+). It catalyses the reaction L-arginine + O2 + H2O = 5-guanidino-2-oxopentanoate + H2O2 + NH4(+). The enzyme catalyses L-tyrosine + O2 + H2O = 3-(4-hydroxyphenyl)pyruvate + H2O2 + NH4(+). Activity is increased by Mn(2+) ions. Inhibited by Zn(2+), Ni(2+), Co(2+), Cu(2+) and Al(3+). No significant activity change by Na(+), K(+), Ca(2+), Mg(2+) and Ba(2+) ions. Both isoform are completely inhibited by L-Cys and reduced glutathione. O-phenanthroline, beta-mercaptoethanol and PMSF completely inhibit the enzymatic activity of LAAOII, but have no activity on LAAOI. Iodoacetic acid inhibits the enzymatic activity of LAAOII by 46% but has no effect on the LAAOI activity. In terms of biological role, catalyzes an oxidative deamination of predominantly hydrophobic and aromatic L-amino acids, thus producing hydrogen peroxide that may contribute to the diverse toxic effects of this enzyme. Shows high specificity for L-Arg, L-Met, L-Phe, L-Leu, L-Tyr, L-Ile and L-Trp, low specificity for L-Val, L-Ala, L-Asn, L-Gln, and no specificity for L-Pro, L-Ser, L-Thr, L-Cys, L-Gly and L-Asp. Exhibits diverse biological activities, such as hemorrhage, hemolysis, edema, antibacterial and antiparasitic activities, as well as regulation of platelet aggregation. Its effect on platelets is controversial, since it either induces aggregation or inhibits agonist-induced aggregation. These different effects are probably due to different experimental conditions. The sequence is that of L-amino acid oxidase from Cerastes cerastes (Horned desert viper).